A 63-amino-acid chain; its full sequence is Cysteine-rich peptide clone 2 (63 aa).

Positions 1 to 23 (MHFSGVVLILLSMTLVNFVFVET) are cleaved as a signal peptide. 3 disulfides stabilise this stretch: cysteine 33–cysteine 53, cysteine 38–cysteine 58, and cysteine 42–cysteine 60.

As to expression, expressed by the venom gland.

The protein resides in the secreted. The polypeptide is Cysteine-rich peptide clone 2 (Tityus costatus (Brazilian scorpion)).